We begin with the raw amino-acid sequence, 264 residues long: Tryptophan synthase alpha chain (264 aa).

Catalysis depends on proton acceptor residues glutamate 44 and aspartate 55.

Belongs to the TrpA family. Tetramer of two alpha and two beta chains.

It carries out the reaction (1S,2R)-1-C-(indol-3-yl)glycerol 3-phosphate + L-serine = D-glyceraldehyde 3-phosphate + L-tryptophan + H2O. It participates in amino-acid biosynthesis; L-tryptophan biosynthesis; L-tryptophan from chorismate: step 5/5. The alpha subunit is responsible for the aldol cleavage of indoleglycerol phosphate to indole and glyceraldehyde 3-phosphate. This chain is Tryptophan synthase alpha chain, found in Lactiplantibacillus plantarum (strain ATCC BAA-793 / NCIMB 8826 / WCFS1) (Lactobacillus plantarum).